The chain runs to 264 residues: S-adenosylmethionine decarboxylase proenzyme (264 aa).

The active-site Schiff-base intermediate with substrate; via pyruvic acid is S114. S114 carries the pyruvic acid (Ser); by autocatalysis modification. H119 serves as the catalytic Proton acceptor; for processing activity. C142 (proton donor; for catalytic activity) is an active-site residue.

This sequence belongs to the prokaryotic AdoMetDC family. Type 2 subfamily. As to quaternary structure, heterooctamer of four alpha and four beta chains arranged as a tetramer of alpha/beta heterodimers. Pyruvate is required as a cofactor. Is synthesized initially as an inactive proenzyme. Formation of the active enzyme involves a self-maturation process in which the active site pyruvoyl group is generated from an internal serine residue via an autocatalytic post-translational modification. Two non-identical subunits are generated from the proenzyme in this reaction, and the pyruvate is formed at the N-terminus of the alpha chain, which is derived from the carboxyl end of the proenzyme. The post-translation cleavage follows an unusual pathway, termed non-hydrolytic serinolysis, in which the side chain hydroxyl group of the serine supplies its oxygen atom to form the C-terminus of the beta chain, while the remainder of the serine residue undergoes an oxidative deamination to produce ammonia and the pyruvoyl group blocking the N-terminus of the alpha chain.

The enzyme catalyses S-adenosyl-L-methionine + H(+) = S-adenosyl 3-(methylsulfanyl)propylamine + CO2. The protein operates within amine and polyamine biosynthesis; S-adenosylmethioninamine biosynthesis; S-adenosylmethioninamine from S-adenosyl-L-methionine: step 1/1. Catalyzes the decarboxylation of S-adenosylmethionine to S-adenosylmethioninamine (dcAdoMet), the propylamine donor required for the synthesis of the polyamines spermine and spermidine from the diamine putrescine. The sequence is that of S-adenosylmethionine decarboxylase proenzyme from Chromohalobacter salexigens (strain ATCC BAA-138 / DSM 3043 / CIP 106854 / NCIMB 13768 / 1H11).